The sequence spans 325 residues: Cln5-like protein 2 (325 aa).

Residues 1-19 (MNKLIFIIICLGIVDKTIS) form the signal peptide. 8 N-linked (GlcNAc...) asparagine glycosylation sites follow: asparagine 88, asparagine 117, asparagine 133, asparagine 163, asparagine 182, asparagine 189, asparagine 238, and asparagine 262.

The protein belongs to the CLN5 family.

This Dictyostelium discoideum (Social amoeba) protein is Cln5-like protein 2 (cln5lb).